A 151-amino-acid chain; its full sequence is Putative pre-16S rRNA nuclease (151 aa).

The protein belongs to the YqgF nuclease family.

It localises to the cytoplasm. Could be a nuclease involved in processing of the 5'-end of pre-16S rRNA. This Paraburkholderia phymatum (strain DSM 17167 / CIP 108236 / LMG 21445 / STM815) (Burkholderia phymatum) protein is Putative pre-16S rRNA nuclease.